A 371-amino-acid chain; its full sequence is Protein STRICTOSIDINE SYNTHASE-LIKE 7 (371 aa).

A signal peptide spans 1-25 (MPVLFSSRSLILSIIVPLLISIALY). N-linked (GlcNAc...) asparagine glycans are attached at residues Asn-101, Asn-137, and Asn-285. At Tyr-303 the chain carries Phosphotyrosine.

The protein belongs to the strictosidine synthase family.

Its subcellular location is the vacuole. In Arabidopsis thaliana (Mouse-ear cress), this protein is Protein STRICTOSIDINE SYNTHASE-LIKE 7.